Reading from the N-terminus, the 277-residue chain is Caspase-3 (277 aa).

Position 1 is an N-acetylmethionine (methionine 1). Propeptides lie at residues 1–9 (MENTENSVD) and 10–28 (SKSIKNSEPKIIHGSKSVD). Residues 1–10 (MENTENSVDS) show a composition bias toward polar residues. The tract at residues 1 to 25 (MENTENSVDSKSIKNSEPKIIHGSK) is disordered. Lysine 11 is subject to N6-acetyllysine. A compositionally biased stretch (basic and acidic residues) spans 11-20 (KSIKNSEPKI). Serine 26 bears the Phosphoserine mark. Catalysis depends on residues histidine 121 and cysteine 163. Position 163 is an S-nitrosocysteine; in inhibited form (cysteine 163).

It belongs to the peptidase C14A family. As to quaternary structure, heterotetramer that consists of two anti-parallel arranged heterodimers, each one formed by a 17 kDa (p17) and a 12 kDa (p12) subunit. Interacts with BIRC6/bruce. Post-translationally, cleavage by granzyme B, caspase-6, caspase-8 and caspase-10 generates the two active subunits. Additional processing of the propeptides is likely due to the autocatalytic activity of the activated protease. Active heterodimers between the small subunit of caspase-7 protease and the large subunit of caspase-3 also occur and vice versa. S-nitrosylated on its catalytic site cysteine in unstimulated cell lines and denitrosylated upon activation of the Fas apoptotic pathway, associated with an increase in intracellular caspase activity. Fas therefore activates caspase-3 not only by inducing the cleavage of the caspase zymogen to its active subunits, but also by stimulating the denitrosylation of its active site thiol. In terms of processing, ubiquitinated by BIRC6; this activity is inhibited by DIABLO/SMAC.

Its subcellular location is the cytoplasm. The catalysed reaction is Strict requirement for an Asp residue at positions P1 and P4. It has a preferred cleavage sequence of Asp-Xaa-Xaa-Asp-|- with a hydrophobic amino-acid residue at P2 and a hydrophilic amino-acid residue at P3, although Val or Ala are also accepted at this position.. Its activity is regulated as follows. Inhibited by BIRC6; following inhibition of BIRC6-caspase binding by DIABLO/SMAC, BIRC6 is subjected to caspase cleavage, leading to an increase in active caspases. Its function is as follows. Involved in the activation cascade of caspases responsible for apoptosis execution. At the onset of apoptosis, it proteolytically cleaves poly(ADP-ribose) polymerase PARP1 at a '216-Asp-|-Gly-217' bond. Cleaves and activates sterol regulatory element binding proteins (SREBPs) between the basic helix-loop-helix leucine zipper domain and the membrane attachment domain. Cleaves and activates caspase-6, -7 and -9 (CASP6, CASP7 and CASP9, respectively). Cleaves and inactivates interleukin-18 (IL18). Triggers cell adhesion in sympathetic neurons through RET cleavage. Cleaves IL-1 beta between an Asp and an Ala, releasing the mature cytokine which is involved in a variety of inflammatory processes. Cleaves and inhibits serine/threonine-protein kinase AKT1 in response to oxidative stress. Acts as an inhibitor of type I interferon production during virus-induced apoptosis by mediating cleavage of antiviral proteins CGAS, IRF3 and MAVS, thereby preventing cytokine overproduction. Also involved in pyroptosis by mediating cleavage and activation of gasdermin-E (GSDME). Cleaves XRCC4 and phospholipid scramblase proteins XKR4, XKR8 and XKR9, leading to promote phosphatidylserine exposure on apoptotic cell surface. Cleaves BIRC6 following inhibition of BIRC6-caspase binding by DIABLO/SMAC. The sequence is that of Caspase-3 (CASP3) from Saimiri boliviensis boliviensis (Bolivian squirrel monkey).